The sequence spans 778 residues: METFFIETLASDVYGKALNVDLDRLSQAQVKYTLQELISYCSALTILHYDYSTLAARLSVYQLHQSTASSFSKAVRLQAAQSCSRLSPQFVDVVYKYKAIFDSYIDYNRDYKLSLLGIETMKNSYLLKNKDGVIMERPQDAYMRVAIMIYGMGKVVNIKMILLTYDLLSRHVITHASPTMFNAGTKKPQLSSCFLLNVNDNLENLYDMVKTAGIISGGGGGIGLCLSGIRAKNSFISGSGLRSNGIQNYIMLQNASQCYANQGGLRPGAYAVYLELWHQDIFTFLQMPRLKGQMAEQRLNAPNLKYGLWVPDLFMEILEDQIHNRGDGTWYLFSPDQAPNLHKVFDLERSQHENAHREFKKLYYQYVAEKRYTGVTTAKEIIKEWFKTVIQVGNPYIGFKDAINRKSNLSHVGTITNSNLCIEVTIPCWEGDKAEQGVCNLAAVNLAAFIRENGYDYRGLIEASGNVTENLDNIIDNGYYPTEATRRSNMRHRPIGIGVFGLADVFASLKMKFGSPEAIAMDEAIHAALYYGAMRRSIELAKEKGSHPSFPGSAASKGLLQPDLWVRCGDLSSSWEERVAQTTQGVLTRKSWWQLRLAAMQGVRNGYLTALMPTATSSNSTGKNECFEPFTSNLYTRRTLSGEFIVLNKYLIDDLKEIDLWTEAIQQQLLNAGGSIQHILDIPAEIRDRYKTSREMNQKILTKHAAARNPFVSQSMSLNYYFYEPELSQVLTVLVLGWKKGLTTGSYYCHFSPGAGTQKKIIRNSEKACNADCEACLL.

Residues serine 177, 192 to 193, glycine 221, 419 to 423, and 613 to 617 each bind substrate; these read SC, NLCIE, and PTATS. Cysteine 193 and cysteine 439 are oxidised to a cystine. Residue asparagine 419 is the Proton acceptor of the active site. The active-site Cysteine radical intermediate is the cysteine 421. Catalysis depends on glutamate 423, which acts as the Proton acceptor.

This sequence belongs to the ribonucleoside diphosphate reductase large chain family. Heterotetramer composed of a homodimer of the large subunit (R1) and a homodimer of the small subunit (R2). Larger multisubunit protein complex are also active, composed of (R1)n(R2)n.

It carries out the reaction a 2'-deoxyribonucleoside 5'-diphosphate + [thioredoxin]-disulfide + H2O = a ribonucleoside 5'-diphosphate + [thioredoxin]-dithiol. With respect to regulation, under complex allosteric control mediated by deoxynucleoside triphosphates and ATP binding. The type of nucleotide bound at the specificity site determines substrate preference. It seems probable that ATP makes the enzyme reduce CDP and UDP, dGTP favors ADP reduction and dTTP favors GDP reduction. Ribonucleoside-diphosphate reductase holoenzyme provides the precursors necessary for viral DNA synthesis. Allows virus growth in non-dividing cells. Catalyzes the biosynthesis of deoxyribonucleotides from the corresponding ribonucleotides. This chain is Ribonucleoside-diphosphate reductase large subunit, found in Ornithodoros (relapsing fever ticks).